The chain runs to 583 residues: Protein disulfide-isomerase-like protein of the testis (583 aa).

A signal peptide spans methionine 1–alanine 17. N-linked (GlcNAc...) asparagine glycans are attached at residues asparagine 58, asparagine 128, asparagine 160, and asparagine 340. The 64-residue stretch at leucine 388–aspartate 451 folds into the Thioredoxin domain. Composition is skewed to basic and acidic residues over residues glutamate 522–proline 531 and asparagine 540–glutamate 559. Residues glutamate 522–leucine 583 are disordered. The N-linked (GlcNAc...) asparagine glycan is linked to asparagine 540. Residues glutamine 573–leucine 583 show a composition bias toward basic residues. The Prevents secretion from ER motif lies at lysine 580–leucine 583.

It belongs to the protein disulfide isomerase family. In terms of assembly, homodimer. The homodimer is not disulfide-linked. Interacts with ERO1A and CLGN. Post-translationally, N-glycosylated.

The protein localises to the endoplasmic reticulum. Probable redox-inactive chaperone involved in spermatogenesis. This chain is Protein disulfide-isomerase-like protein of the testis (PDILT), found in Macaca fascicularis (Crab-eating macaque).